Consider the following 273-residue polypeptide: Beta-lactamase OXA-133 (273 aa).

The signal sequence occupies residues 1-17; the sequence is MNKYFTCYVVASLFFSG. Cys18 carries N-palmitoyl cysteine lipidation. Cys18 carries S-diacylglycerol cysteine lipidation. The Acyl-ester intermediate role is filled by Ser79. Lys82 bears the N6-carboxylysine mark. Substrate is bound at residue 216 to 218; it reads KTG.

Belongs to the class-D beta-lactamase family.

The protein resides in the cell membrane. The catalysed reaction is a beta-lactam + H2O = a substituted beta-amino acid. In terms of biological role, catalyzes the hydrolysis of beta-lactam antibiotics. The chain is Beta-lactamase OXA-133 from Acinetobacter radioresistens.